The primary structure comprises 140 residues: Methylglyoxal synthase (140 aa).

The MGS-like domain maps to 1-140; the sequence is MKIALIAHDR…HDQDSNPINL (140 aa). Residues histidine 8, lysine 12, 34–37, and 54–55 contribute to the substrate site; these read TGTT and SG. Aspartate 60 (proton donor/acceptor) is an active-site residue. Position 87 (histidine 87) interacts with substrate.

This sequence belongs to the methylglyoxal synthase family.

It carries out the reaction dihydroxyacetone phosphate = methylglyoxal + phosphate. Functionally, catalyzes the formation of methylglyoxal from dihydroxyacetone phosphate. This is Methylglyoxal synthase from Latilactobacillus sakei subsp. sakei (strain 23K) (Lactobacillus sakei subsp. sakei).